A 142-amino-acid chain; its full sequence is Large ribosomal subunit protein uL13 (142 aa).

It belongs to the universal ribosomal protein uL13 family. Part of the 50S ribosomal subunit.

This protein is one of the early assembly proteins of the 50S ribosomal subunit, although it is not seen to bind rRNA by itself. It is important during the early stages of 50S assembly. This Dictyoglomus thermophilum (strain ATCC 35947 / DSM 3960 / H-6-12) protein is Large ribosomal subunit protein uL13.